The sequence spans 133 residues: Large ribosomal subunit protein bL17 (133 aa).

Belongs to the bacterial ribosomal protein bL17 family. In terms of assembly, part of the 50S ribosomal subunit. Contacts protein L32.

This is Large ribosomal subunit protein bL17 from Thermodesulfovibrio yellowstonii (strain ATCC 51303 / DSM 11347 / YP87).